The chain runs to 102 residues: Large ribosomal subunit protein bL21 (102 aa).

Belongs to the bacterial ribosomal protein bL21 family. Part of the 50S ribosomal subunit. Contacts protein L20.

This protein binds to 23S rRNA in the presence of protein L20. The sequence is that of Large ribosomal subunit protein bL21 from Geotalea daltonii (strain DSM 22248 / JCM 15807 / FRC-32) (Geobacter daltonii).